Consider the following 169-residue polypeptide: uncharacterized protein (169 aa).

The Nudix hydrolase domain maps to 28 to 157; the sequence is ELHLVVHVCI…EFIPYFFLNQ (130 aa). Positions 65-87 match the Nudix box motif; the sequence is AGSALKGETSRQAAEREVKEELG. Glutamate 81 and glutamate 85 together coordinate Mg(2+).

The protein belongs to the Nudix hydrolase family. It depends on Mg(2+) as a cofactor.

This is an uncharacterized protein from Listeria innocua serovar 6a (strain ATCC BAA-680 / CLIP 11262).